Here is a 211-residue protein sequence, read N- to C-terminus: Thymidylate kinase (211 aa).

11–18 (GPDGAGKT) is a binding site for ATP.

It belongs to the thymidylate kinase family.

It catalyses the reaction dTMP + ATP = dTDP + ADP. Phosphorylation of dTMP to form dTDP in both de novo and salvage pathways of dTTP synthesis. The protein is Thymidylate kinase of Streptococcus equi subsp. equi (strain 4047).